An 803-amino-acid chain; its full sequence is Ubiquitin carboxyl-terminal hydrolase 45 (803 aa).

The tract at residues 1-34 is disordered; it reads MRLKDPFSLKTADMTKRSNKPKKPRDEDSSDEVG. The segment at 36-153 adopts a UBP-type zinc-finger fold; sequence LTCQHVSRAV…QTLDFLQKQS (118 aa). Zn(2+)-binding residues include Cys-38, His-40, Cys-62, Cys-65, Cys-85, Cys-88, Cys-93, His-100, His-104, His-113, Cys-126, and Cys-129. The region spanning 192-802 is the USP domain; that stretch reads KGINNLGNTC…QAYLLFYEEL (611 aa). Cys-201 (nucleophile) is an active-site residue. The disordered stretch occupies residues 394–554; it reads PTNPARLGKS…LPSIRPQQGG (161 aa). Positions 403 to 417 are enriched in basic and acidic residues; the sequence is SGREQDSLTSHDDSL. Polar residues-rich tracts occupy residues 419–440 and 469–480; these read AHSQ…SRHS and SYRTDTMGSQSD. Residues 502 to 531 are compositionally biased toward low complexity; the sequence is SEWSPRIPSVSSHSSTSDKTSITTTLSTTT. A compositionally biased stretch (polar residues) spans 532 to 545; sequence HNPSLKSNPSSTPL. His-739 acts as the Proton acceptor in catalysis.

The protein belongs to the peptidase C19 family. Retina.

It localises to the photoreceptor inner segment. Its subcellular location is the cytoplasm. The protein localises to the nucleus. It carries out the reaction Thiol-dependent hydrolysis of ester, thioester, amide, peptide and isopeptide bonds formed by the C-terminal Gly of ubiquitin (a 76-residue protein attached to proteins as an intracellular targeting signal).. Catalyzes the deubiquitination of SPDL1. Plays a role in the repair of UV-induced DNA damage via deubiquitination of ERCC1, promoting its recruitment to DNA damage sites. May be involved in the maintenance of photoreceptor function. May play a role in normal retinal development. The protein is Ubiquitin carboxyl-terminal hydrolase 45 of Danio rerio (Zebrafish).